A 146-amino-acid polypeptide reads, in one-letter code: Ribosome-binding factor A (146 aa).

The segment at 127 to 146 is disordered; it reads EFAGEADPYKKPEDDEAAES.

It belongs to the RbfA family. In terms of assembly, monomer. Binds 30S ribosomal subunits, but not 50S ribosomal subunits or 70S ribosomes.

It localises to the cytoplasm. Its function is as follows. One of several proteins that assist in the late maturation steps of the functional core of the 30S ribosomal subunit. Associates with free 30S ribosomal subunits (but not with 30S subunits that are part of 70S ribosomes or polysomes). Required for efficient processing of 16S rRNA. May interact with the 5'-terminal helix region of 16S rRNA. The chain is Ribosome-binding factor A from Renibacterium salmoninarum (strain ATCC 33209 / DSM 20767 / JCM 11484 / NBRC 15589 / NCIMB 2235).